The sequence spans 258 residues: Triosephosphate isomerase (258 aa).

A substrate-binding site is contributed by 9–11 (NWK). Residue His-105 is the Electrophile of the active site. Residue Glu-176 is the Proton acceptor of the active site. Gly-182 and Ser-214 together coordinate substrate.

This sequence belongs to the triosephosphate isomerase family. In terms of assembly, homodimer.

Its subcellular location is the cytoplasm. It catalyses the reaction D-glyceraldehyde 3-phosphate = dihydroxyacetone phosphate. Its pathway is carbohydrate biosynthesis; gluconeogenesis. It functions in the pathway carbohydrate degradation; glycolysis; D-glyceraldehyde 3-phosphate from glycerone phosphate: step 1/1. Involved in the gluconeogenesis. Catalyzes stereospecifically the conversion of dihydroxyacetone phosphate (DHAP) to D-glyceraldehyde-3-phosphate (G3P). The protein is Triosephosphate isomerase of Mycoplasmopsis agalactiae (strain NCTC 10123 / CIP 59.7 / PG2) (Mycoplasma agalactiae).